The sequence spans 523 residues: Putative pentatricopeptide repeat-containing protein At3g15200 (523 aa).

PPR repeat units lie at residues 142–172 (SSMLYNEILDVLGKMRRFEEFHQVFDEMSKR), 177–211 (NEKTYEVLLNRYAAAHKVDEAVGVFERRKEFGIDD), 212–242 (DLVAFHGLLMWLCRYKHVEFAETLFCSRRRE), 246–280 (DIKAMNMILNGWCVLGNVHEAKRFWKDIIASKCRP), 281–315 (DVVSYGTMINALTKKGKLGKAMELYRAMWDTRRNP), 316–350 (DVKICNNVIDALCFKKRIPEALEVFREISEKGPDP), 351–385 (NVVTYNSLLKHLCKIRRTEKVWELVEEMELKGGSC), 388–418 (NDVTFSYLLKYSQRSKDVDIVLERMAKNKCE), 420–454 (TSDLYNLMFRLYVQWDKEEKVREIWSEMERSGLGP), and 455–489 (DQRTYTIRIHGLHTKGKIGEALSYFQEMMSKGMVP). The interval 497–523 (LNQNKTKPRVEDKMLRSNLTSEESESD) is disordered.

It belongs to the PPR family. P subfamily.

In Arabidopsis thaliana (Mouse-ear cress), this protein is Putative pentatricopeptide repeat-containing protein At3g15200.